The sequence spans 338 residues: DNA-directed RNA polymerase subunit alpha (338 aa).

The segment at 1–225 (MLISQRPTIT…ELFGLARELN (225 aa)) is alpha N-terminal domain (alpha-NTD). The tract at residues 242–338 (YIAAYSMPIE…YIDVEAEDSE (97 aa)) is alpha C-terminal domain (alpha-CTD). The interval 319–338 (LEGYDAETGGYIDVEAEDSE) is disordered.

The protein belongs to the RNA polymerase alpha chain family. As to quaternary structure, homodimer. The RNAP catalytic core consists of 2 alpha, 1 beta, 1 beta' and 1 omega subunit. When a sigma factor is associated with the core the holoenzyme is formed, which can initiate transcription.

The enzyme catalyses RNA(n) + a ribonucleoside 5'-triphosphate = RNA(n+1) + diphosphate. Functionally, DNA-dependent RNA polymerase catalyzes the transcription of DNA into RNA using the four ribonucleoside triphosphates as substrates. This chain is DNA-directed RNA polymerase subunit alpha, found in Corynebacterium glutamicum (strain ATCC 13032 / DSM 20300 / JCM 1318 / BCRC 11384 / CCUG 27702 / LMG 3730 / NBRC 12168 / NCIMB 10025 / NRRL B-2784 / 534).